We begin with the raw amino-acid sequence, 274 residues long: Elongation factor Ts (274 aa).

Positions 82–85 (TDFV) are involved in Mg(2+) ion dislocation from EF-Tu.

This sequence belongs to the EF-Ts family.

The protein localises to the cytoplasm. Associates with the EF-Tu.GDP complex and induces the exchange of GDP to GTP. It remains bound to the aminoacyl-tRNA.EF-Tu.GTP complex up to the GTP hydrolysis stage on the ribosome. The protein is Elongation factor Ts of Christiangramia forsetii (strain DSM 17595 / CGMCC 1.15422 / KT0803) (Gramella forsetii).